Consider the following 465-residue polypeptide: Ribulose bisphosphate carboxylase large chain (465 aa).

Lys-4 is subject to N6,N6,N6-trimethyllysine. Substrate contacts are provided by Asn-113 and Thr-163. Residue Lys-165 is the Proton acceptor of the active site. Lys-167 is a binding site for substrate. Mg(2+)-binding residues include Lys-191, Asp-193, and Glu-194. Position 191 is an N6-carboxylysine (Lys-191). His-284 acts as the Proton acceptor in catalysis. Substrate-binding residues include Arg-285, His-317, and Ser-369.

The protein belongs to the RuBisCO large chain family. Type I subfamily. Heterohexadecamer of 8 large chains and 8 small chains; disulfide-linked. The disulfide link is formed within the large subunit homodimers. Requires Mg(2+) as cofactor. The disulfide bond which can form in the large chain dimeric partners within the hexadecamer appears to be associated with oxidative stress and protein turnover.

It is found in the plastid. The protein localises to the chloroplast. It catalyses the reaction 2 (2R)-3-phosphoglycerate + 2 H(+) = D-ribulose 1,5-bisphosphate + CO2 + H2O. The catalysed reaction is D-ribulose 1,5-bisphosphate + O2 = 2-phosphoglycolate + (2R)-3-phosphoglycerate + 2 H(+). Functionally, ruBisCO catalyzes two reactions: the carboxylation of D-ribulose 1,5-bisphosphate, the primary event in carbon dioxide fixation, as well as the oxidative fragmentation of the pentose substrate in the photorespiration process. Both reactions occur simultaneously and in competition at the same active site. The sequence is that of Ribulose bisphosphate carboxylase large chain from Nepenthes alata (Winged pitcher plant).